A 280-amino-acid polypeptide reads, in one-letter code: Clathrin adapter accessory protein LAA2 (280 aa).

A disordered region spans residues 1–26 (MSDRDQIEPVTNALDAESDSSDDFGN). The Ear-binding motif motif lies at 19 to 30 (DSSDDFGNFSDA).

Interacts with the clathrin-associated adapter complex AP-1. Interacts with LAA1.

Its subcellular location is the cytoplasmic vesicle. It is found in the clathrin-coated vesicle. In terms of biological role, involved in localization of clathrin-associated adapter complex (AP-1) and subsequent AP-1-mediated clathrin-coated vesicle cargo loading. Directly mediates the interaction between LAA1 and AP-1 which is required for AP-1 localization. In complex with LAA1, cooperates with the small GTPase ARF1 and the phosphatidyl-inositol-4-phosphate (PI4P) synthesis to confer temporal specificity to AP-1 recruitment. This Saccharomyces cerevisiae (strain ATCC 204508 / S288c) (Baker's yeast) protein is Clathrin adapter accessory protein LAA2.